Here is a 404-residue protein sequence, read N- to C-terminus: Probable tRNA sulfurtransferase (404 aa).

Residues 60 to 165 form the THUMP domain; it reads EPVAEALKNV…DEAAYISHEE (106 aa). ATP-binding positions include 183–184, 208–209, R265, G287, and Q296; these read ML and HF.

This sequence belongs to the ThiI family.

It is found in the cytoplasm. The catalysed reaction is [ThiI sulfur-carrier protein]-S-sulfanyl-L-cysteine + a uridine in tRNA + 2 reduced [2Fe-2S]-[ferredoxin] + ATP + H(+) = [ThiI sulfur-carrier protein]-L-cysteine + a 4-thiouridine in tRNA + 2 oxidized [2Fe-2S]-[ferredoxin] + AMP + diphosphate. The enzyme catalyses [ThiS sulfur-carrier protein]-C-terminal Gly-Gly-AMP + S-sulfanyl-L-cysteinyl-[cysteine desulfurase] + AH2 = [ThiS sulfur-carrier protein]-C-terminal-Gly-aminoethanethioate + L-cysteinyl-[cysteine desulfurase] + A + AMP + 2 H(+). Its pathway is cofactor biosynthesis; thiamine diphosphate biosynthesis. In terms of biological role, catalyzes the ATP-dependent transfer of a sulfur to tRNA to produce 4-thiouridine in position 8 of tRNAs, which functions as a near-UV photosensor. Also catalyzes the transfer of sulfur to the sulfur carrier protein ThiS, forming ThiS-thiocarboxylate. This is a step in the synthesis of thiazole, in the thiamine biosynthesis pathway. The sulfur is donated as persulfide by IscS. In Streptococcus uberis (strain ATCC BAA-854 / 0140J), this protein is Probable tRNA sulfurtransferase.